The chain runs to 1120 residues: ISWI chromatin-remodeling complex ATPase ISW2 (1120 aa).

Residues 1–16 show a composition bias toward basic and acidic residues; the sequence is MTTQQEEQRSDTKNSK. 2 disordered regions span residues 1–58 and 129–153; these read MTTQ…VEDR and LSKS…EDAE. Residues Ser17 and Ser19 each carry the phosphoserine modification. The span at 47 to 58 shows a compositional bias: basic and acidic residues; that stretch reads LSDKEIYTVEDR. Residues 196 to 361 form the Helicase ATP-binding domain; that stretch reads ISLHENKLSG…WALLNFLLPD (166 aa). 209 to 216 lines the ATP pocket; it reads DEMGLGKT. The DEAH box signature appears at 312–315; it reads DEAH. In terms of domain architecture, Helicase C-terminal spans 494–645; sequence ILDKLLKRLK…QLVIQQGTGK (152 aa). Disordered stretches follow at residues 764 to 783 and 828 to 853; these read GGGS…PRAP and NEGS…KGHE. The residue at position 831 (Ser831) is a Phosphoserine. Residues 886-938 form the SANT domain; sequence KAFTNWNKRDFMAFINACAKYGRDDMENIKKSIDSKTPEEVEVYAKIFWERLK. A disordered region spans residues 1062–1120; that stretch reads PDANKKKRSRTSATREDTPLSQNESTRASTVPNLPTTMVTNQKDTNDHVDKRTKIDQEA. Thr1079 carries the phosphothreonine modification. Over residues 1080 to 1104 the composition is skewed to polar residues; that stretch reads PLSQNESTRASTVPNLPTTMVTNQK. The residue at position 1082 (Ser1082) is a Phosphoserine. Over residues 1105-1120 the composition is skewed to basic and acidic residues; that stretch reads DTNDHVDKRTKIDQEA.

It belongs to the SNF2/RAD54 helicase family. ISWI subfamily. As to quaternary structure, component of the ISW2 complex, which at least consists of ISW2, ITC1, DLS1 and DPB4. May form a stable subcomplex with ITC1.

It localises to the nucleus. Catalytic component of the ISW2 complex, which acts in remodeling the chromatin by catalyzing an ATP-dependent alteration in the structure of nucleosomal DNA. The ISW2 complex is involved in coordinating transcriptional repression and in inheritance of telomeric silencing. It is involved in repression of MAT a-specific genes, INO1, and early meiotic genes during mitotic growth dependent upon transcription factor UME6 and in a parallel pathway to the RPD3-SIN3 histone deacetylase complex. The polypeptide is ISWI chromatin-remodeling complex ATPase ISW2 (ISW2) (Saccharomyces cerevisiae (strain ATCC 204508 / S288c) (Baker's yeast)).